Here is a 64-residue protein sequence, read N- to C-terminus: Large ribosomal subunit protein bL33m (64 aa).

It belongs to the bacterial ribosomal protein bL33 family. As to quaternary structure, component of the mitochondrial ribosome large subunit (39S) which comprises a 16S rRNA and about 50 distinct proteins.

The protein resides in the mitochondrion. The protein is Large ribosomal subunit protein bL33m (mRpL33) of Drosophila melanogaster (Fruit fly).